The primary structure comprises 194 residues: dCTP deaminase, dUMP-forming (194 aa).

DCTP is bound by residues 104-109 (RSSLGR), Asp-122, 130-132 (TLE), Gln-151, Tyr-165, Lys-172, and Gln-176. The Proton donor/acceptor role is filled by Glu-132.

Belongs to the dCTP deaminase family. In terms of assembly, homotrimer.

The catalysed reaction is dCTP + 2 H2O = dUMP + NH4(+) + diphosphate. Its pathway is pyrimidine metabolism; dUMP biosynthesis; dUMP from dCTP: step 1/1. Functionally, bifunctional enzyme that catalyzes both the deamination of dCTP to dUTP and the hydrolysis of dUTP to dUMP without releasing the toxic dUTP intermediate. This is dCTP deaminase, dUMP-forming from Dictyoglomus thermophilum (strain ATCC 35947 / DSM 3960 / H-6-12).